We begin with the raw amino-acid sequence, 256 residues long: Thiazole synthase (256 aa).

Lys96 serves as the catalytic Schiff-base intermediate with DXP. Residues Gly157, 183-184, and 205-206 contribute to the 1-deoxy-D-xylulose 5-phosphate site; these read AG and NT.

It belongs to the ThiG family. In terms of assembly, homotetramer. Forms heterodimers with either ThiH or ThiS.

It is found in the cytoplasm. It carries out the reaction [ThiS sulfur-carrier protein]-C-terminal-Gly-aminoethanethioate + 2-iminoacetate + 1-deoxy-D-xylulose 5-phosphate = [ThiS sulfur-carrier protein]-C-terminal Gly-Gly + 2-[(2R,5Z)-2-carboxy-4-methylthiazol-5(2H)-ylidene]ethyl phosphate + 2 H2O + H(+). It participates in cofactor biosynthesis; thiamine diphosphate biosynthesis. Its function is as follows. Catalyzes the rearrangement of 1-deoxy-D-xylulose 5-phosphate (DXP) to produce the thiazole phosphate moiety of thiamine. Sulfur is provided by the thiocarboxylate moiety of the carrier protein ThiS. In vitro, sulfur can be provided by H(2)S. The polypeptide is Thiazole synthase (Bacillus cereus (strain ATCC 10987 / NRS 248)).